Consider the following 385-residue polypeptide: Suppressor protein STP22 of temperature-sensitive alpha-factor receptor and arginine permease (385 aa).

Positions 12–161 constitute a UEV domain; the sequence is AVVNWLFKVI…LHEPPQDQAP (150 aa). The tract at residues 155–219 is disordered; sequence PPQDQAPSLP…DMDNTDISPT (65 aa). Residues 168–177 show a composition bias toward polar residues; it reads NTQLQQEQNT. The span at 178–201 shows a compositional bias: pro residues; sequence PPLPPKPKSPHLKPPLPPPPPPQP. Residues 272 to 300 adopt a coiled-coil conformation; that stretch reads LRAVEQAIEQTMHSLNAQIDVLTANRAKV. The region spanning 322–385 is the SB domain; sequence TDGLNQLYNL…HIQRITSPLS (64 aa).

Belongs to the ubiquitin-conjugating enzyme family. UEV subfamily. As to quaternary structure, component of the ESCRT-I complex (endosomal sorting complex required for transport I) which consists of STP22, VPS28, SRN2 and MVB12 in a 1:1:1:1 stoichiometry. Interacts with HSE1 and VPS27. Interacts with MVB12 and SRN2.

It localises to the cytoplasm. The protein localises to the endosome. The protein resides in the late endosome membrane. Component of the ESCRT-I complex, a regulator of vesicular trafficking process. Binds to ubiquitinated cargo proteins and is required for the sorting of endocytic ubiquitinated cargos into multivesicular bodies (MVBs). Mediates the association to the ESCRT-0 complex. Required for vacuolar targeting of temperature-sensitive plasma membrane proteins STE2 and CAN1. The sequence is that of Suppressor protein STP22 of temperature-sensitive alpha-factor receptor and arginine permease (STP22) from Saccharomyces cerevisiae (strain ATCC 204508 / S288c) (Baker's yeast).